We begin with the raw amino-acid sequence, 175 residues long: Large ribosomal subunit protein uL15 (175 aa).

Disordered regions lie at residues 1-65 (MSTL…LPKF) and 155-175 (PESA…QPKA). Positions 12 to 21 (RSWHRKKRVG) are enriched in basic residues. Positions 22–38 (RGQGSGLGKTAGRGGKG) are enriched in gly residues. The span at 160–169 (KAHAGKGVKA) shows a compositional bias: low complexity.

The protein belongs to the universal ribosomal protein uL15 family. Part of the 50S ribosomal subunit.

Its function is as follows. Binds to the 23S rRNA. The chain is Large ribosomal subunit protein uL15 from Myxococcus xanthus (strain DK1622).